Reading from the N-terminus, the 831-residue chain is Multiphosphoryl transfer protein 1 (831 aa).

Residues 1–90 (MLTIQFLCPL…EYIQVRFIDS (90 aa)) enclose the HPr domain. Catalysis depends on histidine 15, which acts as the Pros-phosphohistidine intermediate; for HPr activity. Histidine 15 is subject to Phosphohistidine; by EI. Positions 119–650 (GNVLASGVGV…AVKSQLRQLD (532 aa)) are PTS EI. The active-site Tele-phosphohistidine intermediate; for PTS EI activity is the histidine 298. Histidine 298 is subject to Phosphohistidine; by autocatalysis. Phosphoenolpyruvate contacts are provided by arginine 405 and arginine 441. Residues glutamate 540 and aspartate 564 each contribute to the Mg(2+) site. Residues 563-564 (ND) and arginine 574 contribute to the phosphoenolpyruvate site. The Proton donor; for EI activity role is filled by cysteine 611. One can recognise a PTS EIIA type-2 domain in the interval 685-828 (PLLALENIFV…QSILTLLETE (144 aa)). Residue histidine 747 is the Tele-phosphohistidine intermediate; for PTS EIIA activity of the active site. At histidine 747 the chain carries Phosphohistidine; by HPr.

This sequence belongs to the PEP-utilizing enzyme family. It depends on Mg(2+) as a cofactor.

Its subcellular location is the cytoplasm. It carries out the reaction L-histidyl-[protein] + phosphoenolpyruvate = N(pros)-phospho-L-histidyl-[protein] + pyruvate. It catalyses the reaction D-fructose(out) + N(pros)-phospho-L-histidyl-[protein] = D-fructose 1-phosphate(in) + L-histidyl-[protein]. In terms of biological role, multifunctional protein that includes general (non sugar-specific) and sugar-specific components of the phosphoenolpyruvate-dependent sugar phosphotransferase system (sugar PTS). This major carbohydrate active transport system catalyzes the phosphorylation of incoming sugar substrates concomitantly with their translocation across the cell membrane. The enzyme II FryABC PTS system is involved in fructose transport. The polypeptide is Multiphosphoryl transfer protein 1 (fryA) (Escherichia coli (strain K12)).